The sequence spans 201 residues: Recombination protein RecR (201 aa).

The segment at 57–72 (CADCRTFTEQDVCNIC) adopts a C4-type zinc-finger fold. The region spanning 81–176 (GQICVVESPA…EASRIAHGVP (96 aa)) is the Toprim domain.

The protein belongs to the RecR family.

Functionally, may play a role in DNA repair. It seems to be involved in an RecBC-independent recombinational process of DNA repair. It may act with RecF and RecO. The polypeptide is Recombination protein RecR (Citrobacter koseri (strain ATCC BAA-895 / CDC 4225-83 / SGSC4696)).